Here is a 199-residue protein sequence, read N- to C-terminus: Auxin-responsive protein IAA1 (199 aa).

Positions 25 to 29 (LTLRL) match the EAR-like (transcriptional repression) motif. A disordered region spans residues 31-74 (GSLAAAAAPDPDRKRSSPSSSDAADAADNSSPLAAAADAPPAPK). Residues 47 to 69 (SPSSSDAADAADNSSPLAAAADA) are compositionally biased toward low complexity. The PB1 domain occupies 93–187 (AKFVKVAVDG…TCQRLRLMKS (95 aa)).

Belongs to the Aux/IAA family. In terms of assembly, homodimers and heterodimers. In terms of tissue distribution, highly expressed in flowers. Expressed at low levels in roots and shoots.

It localises to the nucleus. Its function is as follows. Aux/IAA proteins are short-lived transcriptional factors that function as repressors of early auxin response genes at low auxin concentrations. The protein is Auxin-responsive protein IAA1 (IAA1) of Oryza sativa subsp. japonica (Rice).